A 245-amino-acid chain; its full sequence is Orotidine 5'-phosphate decarboxylase (245 aa).

Substrate contacts are provided by residues aspartate 22, lysine 44, 71–80 (DLKFHDIPNT), threonine 131, arginine 192, glutamine 201, glycine 221, and arginine 222. The Proton donor role is filled by lysine 73.

Belongs to the OMP decarboxylase family. Type 1 subfamily. Homodimer.

The enzyme catalyses orotidine 5'-phosphate + H(+) = UMP + CO2. It functions in the pathway pyrimidine metabolism; UMP biosynthesis via de novo pathway; UMP from orotate: step 2/2. Functionally, catalyzes the decarboxylation of orotidine 5'-monophosphate (OMP) to uridine 5'-monophosphate (UMP). The chain is Orotidine 5'-phosphate decarboxylase from Salmonella paratyphi A (strain ATCC 9150 / SARB42).